A 452-amino-acid polypeptide reads, in one-letter code: Protein disulfide-isomerase TMX3 (452 aa).

An N-terminal signal peptide occupies residues 1–26; sequence MAAAGLCFILAIVSSTSLLASVPVSA. The region spanning 27–128 is the Thioredoxin domain; it reads LVEDLDDSFK…KEDIVEFANR (102 aa). Residues 27–375 are Lumenal-facing; it reads LVEDLDDSFK…TVVSVFKSSP (349 aa). Catalysis depends on nucleophile residues cysteine 53 and cysteine 56. Cysteine 53 and cysteine 56 form a disulfide bridge. N-linked (GlcNAc...) asparagine glycosylation is found at asparagine 258 and asparagine 313. Residues 376–396 traverse the membrane as a helical segment; that stretch reads LLGCFLFGLPLGVISIMCYGI. Residues 397 to 452 are Cytoplasmic-facing; sequence CTADTEDGSEEMTRKDVIDQNASDEGSDEEEEKGREITDVSDEDQQEKDFMEKKID. Residues 405–452 form a disordered region; the sequence is SEEMTRKDVIDQNASDEGSDEEEEKGREITDVSDEDQQEKDFMEKKID. The segment covering 443 to 452 has biased composition (basic and acidic residues); sequence EKDFMEKKID. A Di-lysine motif motif is present at residues 449 to 452; sequence KKID.

It belongs to the protein disulfide isomerase family.

It localises to the endoplasmic reticulum membrane. It carries out the reaction Catalyzes the rearrangement of -S-S- bonds in proteins.. In terms of biological role, probable disulfide isomerase, which participates in the folding of proteins containing disulfide bonds. May act as a dithiol oxidase. Acts as a regulator of endoplasmic reticulum-mitochondria contact sites via its ability to regulate redox signals. The polypeptide is Protein disulfide-isomerase TMX3 (tmx3) (Xenopus laevis (African clawed frog)).